We begin with the raw amino-acid sequence, 254 residues long: 3-deoxy-manno-octulosonate cytidylyltransferase (254 aa).

This sequence belongs to the KdsB family.

The protein resides in the cytoplasm. The enzyme catalyses 3-deoxy-alpha-D-manno-oct-2-ulosonate + CTP = CMP-3-deoxy-beta-D-manno-octulosonate + diphosphate. The protein operates within nucleotide-sugar biosynthesis; CMP-3-deoxy-D-manno-octulosonate biosynthesis; CMP-3-deoxy-D-manno-octulosonate from 3-deoxy-D-manno-octulosonate and CTP: step 1/1. Its pathway is bacterial outer membrane biogenesis; lipopolysaccharide biosynthesis. Activates KDO (a required 8-carbon sugar) for incorporation into bacterial lipopolysaccharide in Gram-negative bacteria. The sequence is that of 3-deoxy-manno-octulosonate cytidylyltransferase from Chlamydia abortus (strain DSM 27085 / S26/3) (Chlamydophila abortus).